Reading from the N-terminus, the 289-residue chain is Energy-coupling factor transporter ATP-binding protein EcfA2 (289 aa).

One can recognise an ABC transporter domain in the interval 3 to 246 (IRFKQVDFTY…TQWLKEKQLG (244 aa)). 40-47 (GHTGSGKS) lines the ATP pocket.

This sequence belongs to the ABC transporter superfamily. Energy-coupling factor EcfA family. Forms a stable energy-coupling factor (ECF) transporter complex composed of 2 membrane-embedded substrate-binding proteins (S component), 2 ATP-binding proteins (A component) and 2 transmembrane proteins (T component).

The protein localises to the cell membrane. ATP-binding (A) component of a common energy-coupling factor (ECF) ABC-transporter complex. Unlike classic ABC transporters this ECF transporter provides the energy necessary to transport a number of different substrates. This Enterococcus faecalis (strain ATCC 700802 / V583) protein is Energy-coupling factor transporter ATP-binding protein EcfA2.